We begin with the raw amino-acid sequence, 340 residues long: E3 ubiquitin ligase BIG BROTHER-related (340 aa).

Disordered stretches follow at residues 1-56 (MPME…GVGE) and 133-182 (YDED…GNSD). The segment covering 34 to 46 (NRQTGVVSDTGSG) has biased composition (polar residues). Acidic residues-rich tracts occupy residues 133-164 (YDED…EDGL) and 173-182 (DDQEDDGNSD). The segment at 288-329 (CVICRLDYEDDEDLILLPCKHSYHSECINNWLKINKVCPVCS) adopts an RING-type; atypical zinc-finger fold.

In terms of processing, auto-ubiquitinated.

It catalyses the reaction S-ubiquitinyl-[E2 ubiquitin-conjugating enzyme]-L-cysteine + [acceptor protein]-L-lysine = [E2 ubiquitin-conjugating enzyme]-L-cysteine + N(6)-ubiquitinyl-[acceptor protein]-L-lysine.. It functions in the pathway protein modification; protein ubiquitination. In terms of biological role, E3 ubiquitin-ligase probably involved in organ size regulation. The sequence is that of E3 ubiquitin ligase BIG BROTHER-related (BBR) from Arabidopsis thaliana (Mouse-ear cress).